Reading from the N-terminus, the 599-residue chain is Elongation factor 4 (599 aa).

The region spanning 2–184 (KNIRNFSIIA…RLVRDIPPPE (183 aa)) is the tr-type G domain. Residues 14-19 (DHGKST) and 131-134 (NKID) contribute to the GTP site.

It belongs to the TRAFAC class translation factor GTPase superfamily. Classic translation factor GTPase family. LepA subfamily.

The protein localises to the cell inner membrane. It catalyses the reaction GTP + H2O = GDP + phosphate + H(+). Its function is as follows. Required for accurate and efficient protein synthesis under certain stress conditions. May act as a fidelity factor of the translation reaction, by catalyzing a one-codon backward translocation of tRNAs on improperly translocated ribosomes. Back-translocation proceeds from a post-translocation (POST) complex to a pre-translocation (PRE) complex, thus giving elongation factor G a second chance to translocate the tRNAs correctly. Binds to ribosomes in a GTP-dependent manner. This is Elongation factor 4 from Escherichia fergusonii (strain ATCC 35469 / DSM 13698 / CCUG 18766 / IAM 14443 / JCM 21226 / LMG 7866 / NBRC 102419 / NCTC 12128 / CDC 0568-73).